We begin with the raw amino-acid sequence, 1296 residues long: Histone-lysine N-methyltransferase EHMT1 (1296 aa).

2 disordered regions span residues 1–111 and 170–200; these read MAAA…NHVT and PQTP…TDVR. An N-acetylalanine modification is found at Ala2. The segment covering 14–31 has biased composition (basic and acidic residues); sequence QETKQDCCMKTELLREDT. A Glycyl lysine isopeptide (Lys-Gly) (interchain with G-Cter in SUMO1); alternate cross-link involves residue Lys23. A Glycyl lysine isopeptide (Lys-Gly) (interchain with G-Cter in SUMO2); alternate cross-link involves residue Lys23. Residues 77–89 show a composition bias toward polar residues; the sequence is NTRASPQEGTNRV. Over residues 97–106 the composition is skewed to basic and acidic residues; sequence VSERDTEVGK. Residues Lys191, Lys229, Lys232, Lys315, and Lys325 each participate in a glycyl lysine isopeptide (Lys-Gly) (interchain with G-Cter in SUMO2) cross-link. Residues 341–470 are disordered; that stretch reads SLEMDSEDED…SSPGSMEQAA (130 aa). Acidic residues predominate over residues 342 to 360; the sequence is LEMDSEDEDSDELEDDEDH. Positions 371–391 are enriched in basic and acidic residues; sequence EDSRTSKESMSETDRAAKMDG. The segment covering 392-414 has biased composition (acidic residues); sequence DSEEEQESPDTGEDEDGGDESDL. Lys430 is covalently cross-linked (Glycyl lysine isopeptide (Lys-Gly) (interchain with G-Cter in SUMO2)). A Phosphoserine modification is found at Ser433. Over residues 438 to 450 the composition is skewed to basic residues; sequence PARKRRRRSRKKP. Phosphoserine is present on Ser481. Glycyl lysine isopeptide (Lys-Gly) (interchain with G-Cter in SUMO2) cross-links involve residues Lys559, Lys644, Lys659, and Lys729. The interval 653-714 is disordered; sequence LAPGQEKSLA…PTSGLSQGPG (62 aa). ANK repeat units follow at residues 735 to 764, 770 to 799, 803 to 832, 836 to 866, 870 to 899, 903 to 932, 936 to 965, and 969 to 1002; these read FHPK…DPNF, SKRS…NIDT, DQRT…QVDP, EGST…DVNC, GGWT…DINI, EENI…DLHA, HGDS…DVTL, and EGET…DKPV. The tract at residues 903–905 is histone H3K9me binding; the sequence is EEN. Ser1046 is subject to Phosphoserine. A Pre-SET domain is found at 1058 to 1121; that stretch reads QYCVCVDDCS…NCRNRVVQNG (64 aa). The Zn(2+) site is built by Cys1060, Cys1062, Cys1066, Cys1071, Cys1073, Cys1103, Cys1107, Cys1109, and Cys1113. The SET domain occupies 1124-1241; sequence ARLQLYRTQD…AGEQLGFDYG (118 aa). S-adenosyl-L-methionine contacts are provided by residues 1134 to 1136, Tyr1171, and 1198 to 1199; these read MGW and NH. Residues 1160-1179 are interaction with histone H3; it reads DSEADVREEDSYLFDLDNKD. Cys1201 is a binding site for Zn(2+). An interaction with histone H3 region spans residues 1240-1243; sequence YGER. Residue Cys1254 participates in Zn(2+) binding. Arg1255 is an S-adenosyl-L-methionine binding site. Zn(2+)-binding residues include Cys1256 and Cys1261. The interval 1271 to 1296 is disordered; the sequence is RQASAAQEPQENGLPDTSSAAAADPL.

This sequence belongs to the class V-like SAM-binding methyltransferase superfamily. Interacts with WIZ. Part of the E2F6.com-1 complex in G0 phase composed of E2F6, MGA, MAX, TFDP1, CBX3, BAT8, EHMT1, RING1, RNF2, MBLR, L3MBTL2 and YAF2. Interacts with MPHOSPH8. Interacts with CDYL. Interacts with REST only in the presence of CDYL. Part of a complex containing at least CDYL, REST, WIZ, SETB1, EHMT1 and EHMT2. Heterodimer; heterodimerizes with EHMT2. Interacts (via ANK repeats) with RELA (when monomethylated at 'Lys-310'). Interacts with Baz2b. Ubiquitous.

It localises to the nucleus. The protein resides in the chromosome. The enzyme catalyses N(6)-methyl-L-lysyl(9)-[histone H3] + S-adenosyl-L-methionine = N(6),N(6)-dimethyl-L-lysyl(9)-[histone H3] + S-adenosyl-L-homocysteine + H(+). The catalysed reaction is L-lysyl(9)-[histone H3] + S-adenosyl-L-methionine = N(6)-methyl-L-lysyl(9)-[histone H3] + S-adenosyl-L-homocysteine + H(+). Its activity is regulated as follows. Methyltransferase activity is inhibited by BIX-01294. Efficiently inhibited by compound E72, a BIX-01294 derivative in which the diazepane ring and the benzyl are replaced with a 3-dimethylaminopropyl and a 5-aminopentyl group at sites B and C, respectively. Functionally, histone methyltransferase that specifically mono- and dimethylates 'Lys-9' of histone H3 (H3K9me1 and H3K9me2, respectively) in euchromatin. H3K9me represents a specific tag for epigenetic transcriptional repression by recruiting HP1 proteins to methylated histones. Also weakly methylates 'Lys-27' of histone H3 (H3K27me). Also required for DNA methylation, the histone methyltransferase activity is not required for DNA methylation, suggesting that these 2 activities function independently. Probably targeted to histone H3 by different DNA-binding proteins like E2F6, MGA, MAX and/or DP1. During G0 phase, it probably contributes to silencing of MYC- and E2F-responsive genes, suggesting a role in G0/G1 transition in cell cycle. In addition to the histone methyltransferase activity, also methylates non-histone proteins: mediates dimethylation of 'Lys-373' of p53/TP53. Represses the expression of mitochondrial function-related genes, perhaps by occupying their promoter regions, working in concert with probable chromatin reader Baz2b. In Mus musculus (Mouse), this protein is Histone-lysine N-methyltransferase EHMT1 (Ehmt1).